The following is a 537-amino-acid chain: Zinc metalloproteinase nas-23 (537 aa).

The signal sequence occupies residues 1–16 (MRFLILVLAGSIGIYG). The propeptide occupies 17–111 (VNLPKIPKLS…EQLDHSRTKR (95 aa)). N-linked (GlcNAc...) asparagine glycosylation occurs at Asn-77. The Peptidase M12A domain occupies 116–311 (NAMYPKTIWL…AKINRHYNCE (196 aa)). 6 cysteine pairs are disulfide-bonded: Cys-156/Cys-310, Cys-178/Cys-199, Cys-314/Cys-334, Cys-336/Cys-345, Cys-356/Cys-385, and Cys-412/Cys-433. His-207 is a binding site for Zn(2+). Glu-208 is a catalytic residue. Positions 211 and 217 each coordinate Zn(2+). The region spanning 306 to 346 (RHYNCEKNCKNKITCLNGGYQHPKNCKICVCPPGYGGSDCK) is the EGF-like domain. Positions 356 to 471 (CTGVLVAGET…VQLRYSTVDG (116 aa)) constitute a CUB domain. Asn-481 is a glycosylation site (N-linked (GlcNAc...) asparagine).

It depends on Zn(2+) as a cofactor. As to expression, expressed in the hypodermis, rectum and to a lesser extent in pharyngeal muscles and intestine.

The protein localises to the secreted. Functionally, metalloprotease. The polypeptide is Zinc metalloproteinase nas-23 (nas-23) (Caenorhabditis elegans).